A 394-amino-acid polypeptide reads, in one-letter code: NAC domain-containing protein 3 (394 aa).

The 145-residue stretch at 3–147 (TPVGLRFCPT…TYTLCKVMFN (145 aa)) folds into the NAC domain. The DNA-binding element occupies 104–153 (IGEKKILMFYTSKESKSDWVIHEYHGFSHNQMMMTYTLCKVMFNGGMREK). 2 disordered regions span residues 152-173 (EKSS…RRDS) and 264-300 (NSLT…CDSF). Positions 155–165 (SSSPSSSGVSG) are enriched in low complexity. A compositionally biased stretch (polar residues) spans 286 to 300 (PKTNSIQTSSTCDSF).

The protein resides in the nucleus. The polypeptide is NAC domain-containing protein 3 (NAC003) (Arabidopsis thaliana (Mouse-ear cress)).